The chain runs to 447 residues: UMP-CMP kinase 2, mitochondrial (447 aa).

The N-terminal 73 residues, 1-73 (MALISRPRAP…ELLGPPGRSY (73 aa)), are a transit peptide targeting the mitochondrion. 259 to 266 (GLDATGKT) contacts ATP. The stretch at 380–412 (EERVRRLQGRGQEKTKEEAELEANNVFRQKVEM) forms a coiled coil.

The protein belongs to the thymidylate kinase family. As to expression, strongly expressed in the brain.

The protein resides in the mitochondrion. It carries out the reaction CMP + ATP = CDP + ADP. The catalysed reaction is dCMP + ATP = dCDP + ADP. It catalyses the reaction a 2'-deoxyribonucleoside 5'-diphosphate + ATP = a 2'-deoxyribonucleoside 5'-triphosphate + ADP. The enzyme catalyses a ribonucleoside 5'-diphosphate + ATP = a ribonucleoside 5'-triphosphate + ADP. Its function is as follows. Mitochondrial nucleotide monophosphate kinase needed for salvage dNTP synthesis that mediates immunomodulatory and antiviral activities through IFN-dependent and IFN-independent pathways. Restricts the replication of multiple viruses including flaviviruses or coronaviruses. Together with viperin/RSAD2 and ddhCTP, suppresses the replication of several coronaviruses through inhibition of the viral RNA-dependent RNA polymerase activities. Concerning flaviviruses, restricts RNA translation when localized to the mitochondria independently of its kinase activity. Is able to phosphorylate dUMP, dCMP, CMP, UMP and monophosphates of the pyrimidine nucleoside analogs ddC, dFdC, araC, BVDU and FdUrd with ATP as phosphate donor. Efficacy is highest for dUMP followed by dCMP while CMP and UMP are poor substrates. Controls therefore mitochondrial DNA synthesis by supplying required deoxyribonucleotides. CMPK2-dependent mitochondrial DNA synthesis is necessary for the production of oxidized mitochondrial DNA fragments after exposure to NLRP3 activators. In turn, cytosolic oxidized mtDNA associates with the NLRP3 inflammasome complex and is required for its activation. This chain is UMP-CMP kinase 2, mitochondrial (Cmpk2), found in Mus musculus (Mouse).